The following is a 116-amino-acid chain: Prefoldin subunit beta (116 aa).

Belongs to the prefoldin subunit beta family. In terms of assembly, heterohexamer of two alpha and four beta subunits.

The protein localises to the cytoplasm. In terms of biological role, molecular chaperone capable of stabilizing a range of proteins. Seems to fulfill an ATP-independent, HSP70-like function in archaeal de novo protein folding. This is Prefoldin subunit beta (pfdB) from Archaeoglobus fulgidus (strain ATCC 49558 / DSM 4304 / JCM 9628 / NBRC 100126 / VC-16).